Reading from the N-terminus, the 87-residue chain is Kappa-bungarotoxin (87 aa).

The first 21 residues, 1 to 21, serve as a signal peptide directing secretion; sequence MKTLLLTLVVVTIVCLDLGYT. 5 disulfide bridges follow: cysteine 24-cysteine 42, cysteine 35-cysteine 63, cysteine 48-cysteine 52, cysteine 67-cysteine 79, and cysteine 80-cysteine 85.

It belongs to the three-finger toxin family. Long-chain subfamily. Kappa-neurotoxin sub-subfamily. Homodimer and heterodimer; non-covalently linked. Expressed by the venom gland.

The protein resides in the secreted. Functionally, postsynaptic neurotoxin that binds and inhibits neuronal nicotinic acetylcholine receptors (nAChR) with high affinity (IC(50)&lt;100 nM). Is a selective, and slowly reversible antagonist of alpha-3/CHRNA3-containing and some alpha-4/CHRNA4-containing AChRs. In Bungarus multicinctus (Many-banded krait), this protein is Kappa-bungarotoxin.